Here is a 137-residue protein sequence, read N- to C-terminus: Protein ApaG (137 aa).

Positions 2–126 (PKYQFQVQVQ…FVLEAFSPGQ (125 aa)) constitute an ApaG domain.

In Acidovorax sp. (strain JS42), this protein is Protein ApaG.